The following is a 212-amino-acid chain: Ribonuclease HII (212 aa).

The RNase H type-2 domain occupies 22–212; it reads ILIAGLDEAG…APLKGMIDGL (191 aa). A divalent metal cation-binding residues include Asp28, Glu29, and Asp123.

The protein belongs to the RNase HII family. The cofactor is Mn(2+). Mg(2+) serves as cofactor.

It localises to the cytoplasm. It catalyses the reaction Endonucleolytic cleavage to 5'-phosphomonoester.. Endonuclease that specifically degrades the RNA of RNA-DNA hybrids. The chain is Ribonuclease HII from Dehalococcoides mccartyi (strain ATCC BAA-2100 / JCM 16839 / KCTC 5957 / BAV1).